Reading from the N-terminus, the 3010-residue chain is Genome polyprotein (3010 aa).

An N-acetylserine; by host modification is found at serine 2. Residues 2–23 (STNGKPQRKTKRNTNRRPQDVK) form an interaction with STAT1 region. The tract at residues 2–58 (STNGKPQRKTKRNTNRRPQDVKFPGGGQIVGGVYLLPRRGPRLGVRATRKTWERSQP) is interaction with EIF2AK2/PKR. Residues 2–59 (STNGKPQRKTKRNTNRRPQDVKFPGGGQIVGGVYLLPRRGPRLGVRATRKTWERSQPR) form an interaction with DDX3X region. Positions 2–75 (STNGKPQRKT…PKARQPEGRA (74 aa)) are disordered. At 2–168 (STNGKPQRKT…EDGVNYATGN (167 aa)) the chain is on the cytoplasmic side. 4 short sequence motifs (nuclear localization signal) span residues 5–13 (GKPQRKTKR), 38–43 (PRRGPR), 58–64 (PRGRRQP), and 66–71 (PKARQP). Over residues 7-16 (PQRKTKRNTN) the composition is skewed to basic residues. Phosphoserine; by host is present on serine 99. The interval 112–152 (PRRRSRNLGKVIDTLTCGFADLMGYIPLVGAPLGGVARALA) is important for endoplasmic reticulum and mitochondrial localization. Serine 116 is subject to Phosphoserine; by host PKA. Positions 122–173 (VIDTLTCGFADLMGYIPLVGAPLGGVARALAHGVRVLEDGVNYATGNLPGCS) are interaction with APOA2. Residues 164-167 (YATG) form an important for lipid droplets localization region. A helical transmembrane segment spans residues 169-189 (LPGCSFSIFLLALLSCLTIPA). Residues 178 to 191 (LLALLSCLTIPASA) constitute a propeptide, ER anchor for the core protein, removed in mature form by host signal peptidase. Residues 190-358 (SAYEVHNVSG…GGAHWGVLAG (169 aa)) are Lumenal-facing. N-linked (GlcNAc...) asparagine; by host glycans are attached at residues asparagine 196, asparagine 209, asparagine 234, and asparagine 250. Positions 265-296 (LVGAAAFCSAMYVGDLCGSVFLVSQLFTFSPR) are important for fusion. N-linked (GlcNAc...) asparagine; by host glycosylation is present at asparagine 305. The chain crosses the membrane as a helical span at residues 359–379 (LAYYSMVGNWAKVLIVMLLFA). Residues 380–725 (GVDGSTIVSG…WEYILLLFLL (346 aa)) lie on the Lumenal side of the membrane. The HVR1 stretch occupies residues 385-411 (TIVSGGTVARTTHSLASLFTQGASQKI). N-linked (GlcNAc...) (high mannose) asparagine; by host glycans are attached at residues asparagine 417, asparagine 423, asparagine 430, and asparagine 448. Intrachain disulfides connect cysteine 429/cysteine 552, cysteine 452/cysteine 459, cysteine 486/cysteine 494, and cysteine 503/cysteine 508. The segment at 474 to 479 (YTEADI) is HVR2. Residues 480–493 (QDQRPYCWHYAPRP) are CD81-binding 1. A glycan (N-linked (GlcNAc...) (high mannose) asparagine; by host) is linked at asparagine 532. Residue asparagine 540 is glycosylated (N-linked (GlcNAc...) asparagine; by host). The segment at 544-551 (PPQGNWFG) is CD81-binding 2. Asparagine 556 is a glycosylation site (N-linked (GlcNAc...) (high mannose) asparagine; by host). A disulfide bridge links cysteine 564 with cysteine 569. A glycan (N-linked (GlcNAc...) (high mannose) asparagine; by host) is linked at asparagine 576. 3 disulfides stabilise this stretch: cysteine 581–cysteine 585, cysteine 597–cysteine 620, and cysteine 607–cysteine 644. N-linked (GlcNAc...) (high mannose) asparagine; by host glycosylation is found at asparagine 623 and asparagine 645. Cysteine 652 and cysteine 677 form a disulfide bridge. Positions 660–671 (SELSPLLLSTTE) are PKR/eIF2-alpha phosphorylation homology domain (PePHD). A helical transmembrane segment spans residues 726–746 (LADARVCACLWMMLLIAQAEA). The Lumenal segment spans residues 747 to 757 (ALENLVVFNAA). The chain crosses the membrane as a helical span at residues 758–778 (SVAGMHGTLSFLVFFCAAWYI). Over 779 to 781 (KGR) the chain is Cytoplasmic. A helical membrane pass occupies residues 782–803 (LVPGAAYALYGVWPLLLLLLAL). Residues 804 to 813 (PPRAYAMDRE) lie on the Lumenal side of the membrane. A helical membrane pass occupies residues 814–834 (MAASCGGAVFVGLVLLTLSPH). The Cytoplasmic portion of the chain corresponds to 835-838 (YKMF). The helical transmembrane segment at 839–859 (LARLIWWLQYFITRAEAHLQV) threads the bilayer. Residues 860 to 881 (WIPPLNVRGGRDAIILLTCAAY) lie on the Lumenal side of the membrane. A helical transmembrane segment spans residues 882–902 (PELIFDITKILLAILGPLMVL). Positions 903 to 1026 (QAGLTRIPYF…SLEGRGWRLL (124 aa)) constitute a Peptidase C18 domain. Topologically, residues 903–1657 (QAGLTRIPYF…CMSADLEVVT (755 aa)) are cytoplasmic. The protease NS2-3 stretch occupies residues 904-1206 (AGLTRIPYFV…PVESMETTMR (303 aa)). A lipid anchor (S-palmitoyl cysteine; by host) is attached at cysteine 922. Residues 929 to 949 (AGGHYVQMALMKLAALTGTYV) are interaction with host SCPS1. Catalysis depends on for protease NS2 activity; shared with dimeric partner residues histidine 952, glutamate 972, and cysteine 993. The region spanning 1027 to 1208 (APITAYAQQT…ESMETTMRSP (182 aa)) is the Peptidase S29 domain. Residues histidine 1083 and aspartate 1107 each act as charge relay system; for serine protease NS3 activity in the active site. Residues cysteine 1123 and cysteine 1125 each coordinate Zn(2+). Serine 1165 serves as the catalytic Charge relay system; for serine protease NS3 activity. Residues cysteine 1171 and histidine 1175 each coordinate Zn(2+). The Helicase ATP-binding domain occupies 1217 to 1369 (PAVPQAFQVA…PNIEEIALSN (153 aa)). 1230 to 1237 (APTGSGKS) contributes to the ATP binding site. Residues serine 1237 and glutamate 1317 each coordinate Mg(2+). Residues 1316–1319 (DECH) carry the DECH box motif. Residues 1486–1497 (QRRGRTSRGRRG) are RNA-binding. A helical membrane pass occupies residues 1658 to 1678 (STWVLVGGVLAALAAYCLTTG). The segment at 1679–1690 (SVVIVGRIILSG) is NS3-binding. Residues 1679-1805 (SVVIVGRIIL…SITSPLTTQS (127 aa)) lie on the Cytoplasmic side of the membrane. The helical transmembrane segment at 1806-1824 (TLLFNILGGWVAAQLAPPG) threads the bilayer. Residues 1825–1828 (AASA) lie on the Lumenal side of the membrane. The chain crosses the membrane as a helical span at residues 1829 to 1849 (FVGAGIAGAAVGSIGLGKVLV). Residue aspartate 1850 is a topological domain, cytoplasmic. A helical transmembrane segment spans residues 1851–1871 (MVAGYGAGVAGALVAFKVMSG). At 1872 to 1881 (EMPSTEDLVN) the chain is on the lumenal side. Residues 1882–1902 (LLPAILSPGALVVGVVCAAIL) traverse the membrane as a helical segment. Residues 1903 to 1972 (RRHVDPGEGA…WINEDCSTPC (70 aa)) are Cytoplasmic-facing. S-palmitoyl cysteine; by host attachment occurs at residues cysteine 1968 and cysteine 1972. An intramembrane segment occupies 1973–2002 (SGSWLRDVWDWICTVLADFKTWLQSKLLPR). Residues 2003–2989 (LPGVPFFSCQ…YHSLSRARPR (987 aa)) are Cytoplasmic-facing. The Zn(2+) site is built by cysteine 2011, cysteine 2029, cysteine 2031, and cysteine 2052. The interval 2120–2208 (EFFTEVDGVR…ASSSASQLSA (89 aa)) is FKBP8-binding. Positions 2120–2332 (EFFTEVDGVR…PIPPPRRKRT (213 aa)) are transcriptional activation. Residues 2135–2139 (PACKP) form an interaction with non-structural protein 4A region. An interaction with host SKP2 region spans residues 2189–2441 (RLARGSPPSL…PCAAEESKLP (253 aa)). At serine 2194 the chain carries Phosphoserine; by host; in p56. 5 positions are modified to phosphoserine; by host; in p58: serine 2197, serine 2201, serine 2204, serine 2207, and serine 2210. The ISDR stretch occupies residues 2210 to 2249 (SLKAACTTRHTPPDADLIEANLLWRQEMGGNITRVESENK). The interval 2210-2275 (SLKAACTTRH…REVSVPAEIL (66 aa)) is interaction with EIF2AK2/PKR. Positions 2249–2306 (KVVILDSFDPLRAEEDEREVSVPAEILRKSRKFPPALPVWARPDYNPPLLEPWKDPDY) are NS4B-binding. The short motif at 2322–2325 (PPIP) is the SH3-binding element. Positions 2326-2334 (PPRRKRTVV) match the Nuclear localization signal motif. Lysine 2350 participates in a covalent cross-link: Glycyl lysine isopeptide (Lys-Gly) (interchain with G-Cter in ubiquitin). Residues 2351–2367 (TFGSSESSAAGSGTATA) are compositionally biased toward low complexity. Positions 2351–2409 (TFGSSESSAAGSGTATAPPDQPSDDGDAGSDVESCSSMPPLEGEPGDPDLSDGSWSTVS) are disordered. Residues 2354–2377 (SSESSAAGSGTATAPPDQPSDDGD) are V3. 2 positions are modified to phosphoserine; by host: serine 2448 and serine 2461. The region spanning 2633–2751 (PMGFSYDTRC…ICESAGTQED (119 aa)) is the RdRp catalytic domain. Residues aspartate 2639, aspartate 2737, and aspartate 2738 each coordinate Mg(2+). Residues 2990–3010 (WFMLCLLLLSVGVGIYLLPNR) traverse the membrane as a helical segment.

This sequence belongs to the hepacivirus polyprotein family. Homooligomer. Interacts with E1 (via C-terminus). Interacts with the non-structural protein 5A. Interacts (via N-terminus) with host STAT1 (via SH2 domain); this interaction results in decreased STAT1 phosphorylation and ubiquitin-mediated proteasome-dependent STAT1 degradation, leading to decreased IFN-stimulated gene transcription. Interacts with host STAT3; this interaction constitutively activates STAT3. Interacts with host LTBR receptor. Interacts with host TNFRSF1A receptor and possibly induces apoptosis. Interacts with host HNRPK. Interacts with host YWHAE. Interacts with host UBE3A/E6AP. Interacts with host DDX3X. Interacts with host APOA2. Interacts with host RXRA protein. Interacts with host SP110 isoform 3/Sp110b; this interaction sequesters the transcriptional corepressor SP110 away from the nucleus. Interacts with host CREB3 nuclear transcription protein; this interaction triggers cell transformation. Interacts with host ACY3. Interacts with host C1QR1. Interacts with host RBM24; this interaction, which enhances the interaction of the mature core protein with 5'-UTR, may inhibit viral translation and favor replication. Interacts with host EIF2AK2/PKR; this interaction induces the autophosphorylation of EIF2AK2. Part of the viral assembly initiation complex composed of NS2, E1, E2, NS3, NS4A, NS5A and the mature core protein. As to quaternary structure, forms a heterodimer with envelope glycoprotein E2. Interacts with mature core protein. Interacts with protease NS2. The heterodimer E1/E2 interacts with host CLDN1; this interaction plays a role in viral entry into host cell. Interacts with host SPSB2 (via C-terminus). Part of the viral assembly initiation complex composed of NS2, E1, E2, NS3, NS4A, NS5A and the mature core protein. Interacts with host NEURL3; this interaction prevents E1 binding to glycoprotein E2. In terms of assembly, forms a heterodimer with envelope glycoprotein E1. Interacts with host CD81 and SCARB1 receptors; these interactions play a role in viral entry into host cell. Interacts with host EIF2AK2/PKR; this interaction inhibits EIF2AK2 and probably allows the virus to evade the innate immune response. Interacts with host CD209/DC-SIGN and CLEC4M/DC-SIGNR. Interact with host SPCS1; this interaction is essential for viral particle assembly. Interacts with protease NS2. The heterodimer E1/E2 interacts with host CLDN1; this interaction plays a role in viral entry into host cell. Part of the viral assembly initiation complex composed of NS2, E1, E2, NS3, NS4A, NS5A and the mature core protein. Interacts with host SLC3A2/4F2hc; the interaction may facilitate viral entry into host cell. Interacts with human PLSCR1. Homohexamer. Homoheptamer. Interacts with protease NS2. As to quaternary structure, homodimer. Interacts with host SPCS1; this interaction is essential for viral particle assembly. Interacts with envelope glycoprotein E1. Interacts with envelope glycoprotein E2. Interacts with viroporin p7. Interacts with serine protease/helicase NS3. Part of the replication complex composed of NS2, NS3, NS4A, NS4B, NS5A and the RNA-directed RNA polymerase embedded in an ER-derived membranous web. Part of the viral assembly initiation complex composed of NS2, E1, E2, NS3, NS4A, NS5A and the mature core protein. In terms of assembly, interacts with protease NS2. Interacts with non-structural protein 4A; this interaction stabilizes the folding of NS3 serine protease. NS3-NS4A interaction is essential for NS3 activation and allows membrane anchorage of the latter. NS3/NS4A complex also prevents phosphorylation of host IRF3, thus preventing the establishment of dsRNA induced antiviral state. Interacts with host MAVS; this interaction leads to the cleavage and inhibition of host MAVS. Interacts with host TICAM1; this interaction leads to the cleavage and inhibition of host TICAM1. Interacts with host TANK-binding kinase/TBK1; this interaction results in the inhibition of the association between TBK1 and IRF3, which leads to the inhibition of IRF3 activation. Interacts with host RBM24. Part of the replication complex composed of NS2, NS3, NS4A, NS4B, NS5A and the RNA-directed RNA polymerase embedded in an ER-derived membranous web. Part of the viral assembly initiation complex composed of NS2, E1, E2, NS3, NS4A, NS5A and the mature core protein. Interacts with NS3 serine protease; this interaction stabilizes the folding of NS3 serine protease. NS3-NS4A interaction is essential for NS3 activation and allows membrane anchorage of the latter. Interacts with non-structural protein 5A (via N-terminus). Part of the replication complex composed of NS2, NS3, NS4A, NS4B, NS5A and the RNA-directed RNA polymerase embedded in an ER-derived membranous web. Part of the viral assembly initiation complex composed of NS2, E1, E2, NS3, NS4A, NS5A and the mature core protein. As to quaternary structure, homomultimer. Interacts with non-structural protein NS5A. Interacts with host PLA2G4C; this interaction likely initiates the recruitment of replication complexes to lipid droplets. Interacts with host STING; this interaction disrupts the interaction between STING and TBK1 thereby suppressing the interferon signaling. Part of the replication complex composed of NS2, NS3, NS4A, NS4B, NS5A and the RNA-directed RNA polymerase embedded in an ER-derived membranous web. In terms of assembly, monomer. Homodimer; dimerization is required for RNA-binding. Interacts with the mature core protein. Interacts (via N-terminus) with non-structural protein 4A. Interacts with non-structural protein 4B. Interacts (via region D2) with RNA-directed RNA polymerase. Part of the viral assembly initiation complex composed of NS2, E1, E2, NS3, NS4A, NS5A and the mature core protein. Part of the replication complex composed of NS2, NS3, NS4A, NS4B, NS5A and the RNA-directed RNA polymerase embedded in an ER-derived membranous web. Interacts with host GRB2. Interacts with host BIN1. Interacts with host PIK3R1. Interacts with host SRCAP. Interacts with host FKBP8. Interacts (via C-terminus) with host VAPB (via MSP domain). Interacts with host EIF2AK2/PKR; this interaction leads to disruption of EIF2AK2 dimerization by NS5A and probably allows the virus to evade the innate immune response. Interacts (via N-terminus) with host PACSIN2 (via N-terminus); this interaction attenuates protein kinase C alpha-mediated phosphorylation of PACSIN2 by disrupting the interaction between PACSIN2 and PRKCA. Interacts (via N-terminus) with host SRC kinase (via SH2 domain). Interacts with most Src-family kinases. Interacts with host IFI27 and SKP2; promotes the ubiquitin-mediated proteasomal degradation of NS5A. Interacts with host GPS2. Interacts with host TNFRSF21; this interaction allows the modulation by the virus of JNK, p38 MAPK, STAT3, and Akt signaling pathways in a DR6-dependent manner. Interacts (via N-terminus) with host CIDEB (via N-terminus); this interaction seems to regulate the association of HCV particles with APOE. Interacts with host CHKA/Choline Kinase-alpha; CHKA bridges host PI4KA and NS5A and potentiates NS5A-stimulated PI4KA activity, which then facilitates the targeting of the ternary complex to the ER for viral replication. Interacts with host SPSB2 (via C-terminus); this interaction targets NS5A for ubiquitination and degradation. Interacts with host RAB18; this interaction may promote the association of NS5A and other replicase components with lipid droplets. Interacts (via region D2) with host PPIA/CYPA; the interaction stimulates RNA-binding ability of NS5A and is dependent on the peptidyl-prolyl cis-trans isomerase activity of PPIA/CYPA. Interacts with host TRIM14; this interaction induces the degradation of NS5A. Homooligomer. Interacts with non-structural protein 5A. Interacts with host VAPB. Interacts with host PRK2/PKN2. Interacts with host HNRNPA1 and SEPT6; these interactions facilitate viral replication. Part of the replication complex composed of NS2, NS3, NS4A, NS4B, NS5A and the RNA-directed RNA polymerase. Zn(2+) is required as a cofactor. The cofactor is Mg(2+). Post-translationally, specific enzymatic cleavages in vivo yield mature proteins. The structural proteins, core, E1, E2 and p7 are produced by proteolytic processing by host signal peptidases. The core protein precursor is synthesized as a 23 kDa, which is retained in the ER membrane through the hydrophobic signal peptide. Cleavage by the signal peptidase releases the 21 kDa mature core protein. The cleavage of the core protein precursor occurs between aminoacids 176 and 188 but the exact cleavage site is not known. Some degraded forms of the core protein appear as well during the course of infection. The other proteins (p7, NS2, NS3, NS4A, NS4B, NS5A and NS5B) are cleaved by the viral proteases. Autoprocessing between NS2 and NS3 is mediated by the NS2 cysteine protease catalytic domain and regulated by the NS3 N-terminal domain. Phosphorylated by host PKC and PKA. In terms of processing, ubiquitinated; mediated by UBE3A and leading to core protein subsequent proteasomal degradation. Post-translationally, highly N-glycosylated. Palmitoylation is required for NS2/3 autoprocessing and E2 recruitment to membranes. In terms of processing, palmitoylated. This modification may play a role in its polymerization or in protein-protein interactions. Post-translationally, phosphorylated on serines in a basal form termed p56. p58 is a hyperphosphorylated form of p56. p56 and p58 coexist in the cell in roughly equivalent amounts. Hyperphosphorylation is dependent on the presence of NS4A. Host CSNK1A1/CKI-alpha or RPS6KB1 kinases may be responsible for NS5A phosphorylation. Tyrosine phosphorylation is essential for the interaction with host SRC. In terms of processing, the N-terminus is phosphorylated by host PRK2/PKN2. Post-translationally, ubiquitinated. Ubiquitination, most probably at Lys-2350, mediated by host IFI27 and SKP2 leads to proteasomal degradation, restricting viral infection. Ubiquitination by host TRIM22 leads to interruption of viral replication.

It is found in the host endoplasmic reticulum membrane. The protein localises to the host mitochondrion membrane. It localises to the virion. The protein resides in the host cytoplasm. Its subcellular location is the host nucleus. It is found in the host lipid droplet. The protein localises to the virion membrane. It localises to the host mitochondrion. The protein resides in the host cell membrane. Its subcellular location is the host perinuclear region. The enzyme catalyses Hydrolysis of four peptide bonds in the viral precursor polyprotein, commonly with Asp or Glu in the P6 position, Cys or Thr in P1 and Ser or Ala in P1'.. It carries out the reaction a ribonucleoside 5'-triphosphate + H2O = a ribonucleoside 5'-diphosphate + phosphate + H(+). It catalyses the reaction ATP + H2O = ADP + phosphate + H(+). The catalysed reaction is RNA(n) + a ribonucleoside 5'-triphosphate = RNA(n+1) + diphosphate. Its activity is regulated as follows. Inhibited by the antiviral drug hexamethylene amiloride. Inhibition by amantadine appears to be genotype-dependent. Also inhibited by long-alkyl-chain iminosugar derivatives. With respect to regulation, activity is up-regulated by PRK2/PKN2-mediated phosphorylation. Functionally, packages viral RNA to form a viral nucleocapsid, and promotes virion budding. Participates in the viral particle production as a result of its interaction with the non-structural protein 5A. Binds RNA and may function as a RNA chaperone to induce the RNA structural rearrangements taking place during virus replication. Modulates viral translation initiation by interacting with viral IRES and 40S ribosomal subunit. Affects various cell signaling pathways, host immunity and lipid metabolism. Prevents the establishment of cellular antiviral state by blocking the interferon-alpha/beta (IFN-alpha/beta) and IFN-gamma signaling pathways and by blocking the formation of phosphorylated STAT1 and promoting ubiquitin-mediated proteasome-dependent degradation of STAT1. Activates STAT3 leading to cellular transformation. Regulates the activity of cellular genes, including c-myc and c-fos. May repress the promoter of p53, and sequester CREB3 and SP110 isoform 3/Sp110b in the cytoplasm. Represses cell cycle negative regulating factor CDKN1A, thereby interrupting an important check point of normal cell cycle regulation. Targets transcription factors involved in the regulation of inflammatory responses and in the immune response: suppresses TNF-induced NF-kappa-B activation, and activates AP-1. Binds to dendritic cells (DCs) via C1QR1, resulting in down-regulation of T-lymphocytes proliferation. Alters lipid metabolism by interacting with hepatocellular proteins involved in lipid accumulation and storage. Induces up-regulation of FAS promoter activity, and thereby contributes to the increased triglyceride accumulation in hepatocytes (steatosis). In terms of biological role, forms a heterodimer with envelope glycoprotein E2, which mediates virus attachment to the host cell, virion internalization through clathrin-dependent endocytosis and fusion with host membrane. Fusion with the host cell is most likely mediated by both E1 and E2, through conformational rearrangements of the heterodimer required for fusion rather than a classical class II fusion mechanism. E1/E2 heterodimer binds host apolipoproteins such as APOB and ApoE thereby forming a lipo-viro-particle (LVP). APOE associated to the LVP allows the initial virus attachment to cell surface receptors such as the heparan sulfate proteoglycans (HSPGs), syndecan-1 (SDC1), syndecan-1 (SDC2), the low-density lipoprotein receptor (LDLR) and scavenger receptor class B type I (SCARB1). The cholesterol transfer activity of SCARB1 allows E2 exposure and binding of E2 to SCARB1 and the tetraspanin CD81. E1/E2 heterodimer binding on CD81 activates the epithelial growth factor receptor (EGFR) signaling pathway. Diffusion of the complex E1-E2-EGFR-SCARB1-CD81 to the cell lateral membrane allows further interaction with Claudin 1 (CLDN1) and occludin (OCLN) to finally trigger HCV entry. Forms a heterodimer with envelope glycoprotein E1, which mediates virus attachment to the host cell, virion internalization through clathrin-dependent endocytosis and fusion with host membrane. Fusion with the host cell is most likely mediated by both E1 and E2, through conformational rearrangements of the heterodimer required for fusion rather than a classical class II fusion mechanism. The interaction between envelope glycoprotein E2 and host apolipoprotein E/APOE allows the proper assembly, maturation and infectivity of the viral particles. This interaction is probably promoted via the up-regulation of cellular autophagy by the virus. E1/E2 heterodimer binds host apolipoproteins such as APOB and APOE thereby forming a lipo-viro-particle (LVP). APOE associated to the LVP allows the initial virus attachment to cell surface receptors such as the heparan sulfate proteoglycans (HSPGs), syndecan-1 (SDC1), syndecan-1 (SDC2), the low-density lipoprotein receptor (LDLR) and scavenger receptor class B type I (SCARB1). The cholesterol transfer activity of SCARB1 allows E2 exposure and binding of E2 to SCARB1 and the tetraspanin CD81. E1/E2 heterodimer binding on CD81 activates the epithelial growth factor receptor (EGFR) signaling pathway. Diffusion of the complex E1-E2-EGFR-SCARB1-CD81 to the cell lateral membrane allows further interaction with Claudin 1 (CLDN1) and occludin (OCLN) to finally trigger HCV entry. Inhibits host EIF2AK2/PKR activation, preventing the establishment of an antiviral state. Viral ligand for CD209/DC-SIGN and CLEC4M/DC-SIGNR, which are respectively found on dendritic cells (DCs), and on liver sinusoidal endothelial cells and macrophage-like cells of lymph node sinuses. These interactions allow the capture of circulating HCV particles by these cells and subsequent facilitated transmission to permissive cells such as hepatocytes and lymphocyte subpopulations. The interaction between E2 and host amino acid transporter complex formed by SLC3A2 and SLC7A5/LAT1 may facilitate viral entry into host cell. Its function is as follows. Ion channel protein that acts as a viroporin and plays an essential role in the assembly, envelopment and secretion of viral particles. Regulates the host cell secretory pathway, which induces the intracellular retention of viral glycoproteins and favors assembly of viral particles. Creates a pore in acidic organelles and releases Ca(2+) and H(+) in the cytoplasm of infected cells, leading to a productive viral infection. High levels of cytoplasmic Ca(2+) may trigger membrane trafficking and transport of viral ER-associated proteins to viroplasms, sites of viral genome replication. This ionic imbalance induces the assembly of the inflammasome complex, which triggers the maturation of pro-IL-1beta into IL-1beta through the action of caspase-1. Targets also host mitochondria and induces mitochondrial depolarization. In addition of its role as a viroporin, acts as a lipid raft adhesion factor. Functionally, cysteine protease required for the proteolytic auto-cleavage between the non-structural proteins NS2 and NS3. The N-terminus of NS3 is required for the function of NS2 protease (active region NS2-3). Promotes the initiation of viral particle assembly by mediating the interaction between structural and non-structural proteins. In terms of biological role, displays three enzymatic activities: serine protease with a chymotrypsin-like fold, NTPase and RNA helicase. NS3 serine protease, in association with NS4A, is responsible for the cleavages of NS3-NS4A, NS4A-NS4B, NS4B-NS5A and NS5A-NS5B. The NS3/NS4A complex prevents phosphorylation of host IRF3, thus preventing the establishment of dsRNA induced antiviral state. The NS3/NS4A complex induces host amino acid transporter component SLC3A2, thus contributing to HCV propagation. NS3 RNA helicase binds to RNA and unwinds both dsDNA and dsRNA in the 3' to 5' direction, and likely resolves RNA complicated stable secondary structures in the template strand. Binds a single ATP and catalyzes the unzipping of a single base pair of dsRNA. Inhibits host antiviral proteins TBK1 and IRF3 thereby preventing the establishment of an antiviral state. Cleaves host MAVS/CARDIF thereby preventing the establishment of an antiviral state. Cleaves host TICAM1/TRIF, thereby disrupting TLR3 signaling and preventing the establishment of an antiviral state. Peptide cofactor which forms a non-covalent complex with the N-terminal of NS3 serine protease. The NS3/NS4A complex prevents phosphorylation of host IRF3, thus preventing the establishment of dsRNA induced antiviral state. The NS3/NS4A complex induces host amino acid transporter component SLC3A2, thus contributing to HCV propagation. Its function is as follows. Induces a specific membrane alteration that serves as a scaffold for the virus replication complex. This membrane alteration gives rise to the so-called ER-derived membranous web that contains the replication complex. NS4B self-interaction contributes to its function in membranous web formation. Promotes host TRIF protein degradation in a CASP8-dependent manner thereby inhibiting host TLR3-mediated interferon signaling. Disrupts the interaction between STING and TBK1 contributing to the inhibition of interferon signaling. Functionally, phosphorylated protein that is indispensable for viral replication and assembly. Both hypo- and hyperphosphorylated states are required for the viral life cycle. The hyperphosphorylated form of NS5A is an inhibitor of viral replication. Involved in RNA-binding and especially in binding to the viral genome. Zinc is essential for RNA-binding. Participates in the viral particle production as a result of its interaction with the mature viral core protein. Its interaction with host VAPB may target the viral replication complex to vesicles. Down-regulates viral IRES translation initiation. Mediates interferon resistance, presumably by interacting with and inhibiting host EIF2AK2/PKR. Prevents BIN1-induced apoptosis. Acts as a transcriptional activator of some host genes important for viral replication when localized in the nucleus. Via the interaction with host PACSIN2, modulates lipid droplet formation in order to promote virion assembly. Modulates TNFRSF21/DR6 signaling pathway for viral propagation. In terms of biological role, RNA-dependent RNA polymerase that performs primer-template recognition and RNA synthesis during viral replication. Initiates RNA transcription/replication at a flavin adenine dinucleotide (FAD), resulting in a 5'- FAD cap on viral RNAs. In this way, recognition of viral 5' RNA by host pattern recognition receptors can be bypassed, thereby evading activation of antiviral pathways. In Hepatitis C virus genotype 1b (isolate Taiwan) (HCV), this protein is Genome polyprotein.